The chain runs to 722 residues: ORC ubiquitin ligase 1 (722 aa).

An RING-type; degenerate zinc finger spans residues 18 to 56; it reads CHICLGKVRQPVVCTNNHVFCSICIDLWLKNNSQCPACR. Coiled-coil stretches lie at residues 87–129 and 157–267; these read LRKT…TILD and VVEW…KEDV. The residue at position 210 (serine 210) is a Phosphoserine. The disordered stretch occupies residues 273 to 359; it reads RAPSADSKGP…RLGARETPMD (87 aa). A compositionally biased stretch (low complexity) spans 302-319; it reads AGSASASHLASPSSSRLA. Over residues 323-338 the composition is skewed to polar residues; that stretch reads SVRQESTSRTEPNCPQ. A compositionally biased stretch (basic and acidic residues) spans 339–359; it reads NKDRYPKPTEPRLGARETPMD. 5 positions are modified to phosphoserine: serine 522, serine 549, serine 557, serine 564, and serine 566. The span at 541–555 shows a compositional bias: polar residues; the sequence is MSESDNSKSPCNNGF. 2 disordered regions span residues 541–585 and 691–722; these read MSES…GSKL and VPEK…ATKS. The span at 571–581 shows a compositional bias: basic and acidic residues; it reads EFLEEPDKLQE. Residues 698-722 show a composition bias toward polar residues; that stretch reads NGNQSTKRKIQSSLANASPSKATKS. Residues serine 715 and serine 717 each carry the phosphoserine modification.

As to quaternary structure, associates with ORC complex. Binds to chromatin; association is cell cycle-regulated, absent from mitotic chromosomes, is associated with chromatin from G1 and partially released from chromatin from mid S-phase. In terms of processing, auto-ubiquitinated.

It localises to the chromosome. It carries out the reaction S-ubiquitinyl-[E2 ubiquitin-conjugating enzyme]-L-cysteine + [acceptor protein]-L-lysine = [E2 ubiquitin-conjugating enzyme]-L-cysteine + N(6)-ubiquitinyl-[acceptor protein]-L-lysine.. In terms of biological role, E3 ubiquitin ligase essential for DNA replication origin activation during S phase. Acts as a replication origin selector which selects the origins to be fired and catalyzes the multi-mono-ubiquitination of a subset of chromatin-bound ORC3 and ORC5 during S-phase. This Mus musculus (Mouse) protein is ORC ubiquitin ligase 1.